The primary structure comprises 477 residues: UDP-N-acetylmuramate--L-alanine ligase (477 aa).

Residue 120 to 126 (GSHGKTT) participates in ATP binding.

The protein belongs to the MurCDEF family.

The protein localises to the cytoplasm. It catalyses the reaction UDP-N-acetyl-alpha-D-muramate + L-alanine + ATP = UDP-N-acetyl-alpha-D-muramoyl-L-alanine + ADP + phosphate + H(+). It functions in the pathway cell wall biogenesis; peptidoglycan biosynthesis. Functionally, cell wall formation. This Rickettsia canadensis (strain McKiel) protein is UDP-N-acetylmuramate--L-alanine ligase.